The primary structure comprises 215 residues: Hibernation-associated plasma protein HP-25 (215 aa).

The first 28 residues, 1–28 (MPAQRGGALSMGAAGFWILVLSITSALA), serve as a signal peptide directing secretion. Positions 29–96 (DSNNQGNSEP…RPKSAFAVKL (68 aa)) are disordered. Composition is skewed to pro residues over residues 39–51 (CGPP…PGIP) and 60–77 (LGPP…PQGP). Residues 40–81 (GPPGPPGPPGIPGFPGAPGALGPPGPPGVPGIPGPQGPPGDV) enclose the Collagen-like domain. Positions 85 to 215 (SSRPKSAFAV…VFFGYLLYGK (131 aa)) constitute a C1q domain. An N-linked (GlcNAc...) asparagine glycan is attached at N167.

As to expression, plasma; synthesized in the liver.

The protein localises to the secreted. Plasma proteins HP-20, HP-25, HP-27 and HP-55 form a 140 kDa complex via disulfide bonds in the plasma and are hibernation specific. The protein is Hibernation-associated plasma protein HP-25 of Tamias sibiricus (Siberian chipmunk).